Reading from the N-terminus, the 137-residue chain is uncharacterized protein (137 aa).

This is an uncharacterized protein from Bos taurus (Bovine).